Consider the following 566-residue polypeptide: Bicarbonate transporter BicA (566 aa).

At 1–15 (MQITNKIHFRNIRGD) the chain is on the cytoplasmic side. A helical membrane pass occupies residues 16-36 (IFGGLTAAVIALPMALAFGVA). Residues 37-42 (SGAGAE) lie on the Periplasmic side of the membrane. A helical membrane pass occupies residues 43–63 (AGLWGAVLVGFFAALFGGTPT). A topological domain (cytoplasmic) is located at residue L64. A helical membrane pass occupies residues 65-85 (ISEPTGPMTVVMTAVIAHFTA). T69 contributes to the hydrogencarbonate binding site. The Periplasmic portion of the chain corresponds to 86–93 (SAATPEEG). The helical transmembrane segment at 94–114 (LAIAFTVVMMAGVFQIIFGSL) threads the bilayer. Over 115-126 (KLGKYVTMMPYT) the chain is Cytoplasmic. A helical membrane pass occupies residues 127-147 (VISGFMSGIGIILVILQLAPF). The Periplasmic segment spans residues 148–169 (LGQASPGGGVIGTLQNLPTLLS). Residues 170–190 (NIQPGETALALGTVAIIWFMP) form a helical membrane-spanning segment. Topologically, residues 191–196 (EKFKKV) are cytoplasmic. Residues 197–217 (IPPQLVALVLGTVIAFFVFPP) form a helical membrane-spanning segment. At 218–247 (EVSDLRRIGEIRAGFPELVRPSFSPVEFQR) the chain is on the periplasmic side. The chain crosses the membrane as a helical span at residues 248–268 (MILDAAVLGMLGCIDALLTSV). Na(+) is bound by residues D262, T266, and G304. The Cytoplasmic portion of the chain corresponds to 269 to 318 (VADSLTRTEHNSNKELIGQGLGNLFSGLFGGIAGAGATMGTVVNIQSGGR). A305 contributes to the hydrogencarbonate binding site. T306 contributes to the Na(+) binding site. The helical transmembrane segment at 319–339 (TALSGLVRAFVLLVVILGAAS) threads the bilayer. Residue L340 is a topological domain, periplasmic. The helical transmembrane segment at 341–361 (TATIPLAVLAGIAFKVGVDII) threads the bilayer. Residues 362–371 (DWSFLKRAHE) lie on the Cytoplasmic side of the membrane. The chain crosses the membrane as a helical span at residues 372-392 (ISPKGALIMYGVILLTVLVDL). I393 is a topological domain (periplasmic). A helical transmembrane segment spans residues 394-414 (VAVGVGVFVANVLTIERMSNL). At 415–566 (QSEKVQTVSD…GVTAPSSEMG (152 aa)) the chain is on the cytoplasmic side. One can recognise an STAS domain in the interval 436 to 546 (KRWLDEGQGR…MSREEALKNA (111 aa)).

It belongs to the SLC26A/SulP transporter (TC 2.A.53) family.

The protein localises to the cell inner membrane. Low/medium affinity, Na(+)-dependent bicarbonate transporter. The sequence is that of Bicarbonate transporter BicA (bicA) from Picosynechococcus sp. (strain ATCC 27264 / PCC 7002 / PR-6) (Agmenellum quadruplicatum).